Consider the following 325-residue polypeptide: 5-dehydro-2-deoxygluconokinase (325 aa).

The protein belongs to the carbohydrate kinase PfkB family.

It carries out the reaction 5-dehydro-2-deoxy-D-gluconate + ATP = 6-phospho-5-dehydro-2-deoxy-D-gluconate + ADP + H(+). Its pathway is polyol metabolism; myo-inositol degradation into acetyl-CoA; acetyl-CoA from myo-inositol: step 5/7. In terms of biological role, catalyzes the phosphorylation of 5-dehydro-2-deoxy-D-gluconate (2-deoxy-5-keto-D-gluconate or DKG) to 6-phospho-5-dehydro-2-deoxy-D-gluconate (DKGP). The chain is 5-dehydro-2-deoxygluconokinase from Listeria monocytogenes serovar 1/2a (strain ATCC BAA-679 / EGD-e).